A 156-amino-acid polypeptide reads, in one-letter code: Ribosomal RNA large subunit methyltransferase H (156 aa).

Residues Leu-73, Gly-104, and 123–128 (LSPLTL) each bind S-adenosyl-L-methionine.

It belongs to the RNA methyltransferase RlmH family. In terms of assembly, homodimer.

The protein resides in the cytoplasm. It carries out the reaction pseudouridine(1915) in 23S rRNA + S-adenosyl-L-methionine = N(3)-methylpseudouridine(1915) in 23S rRNA + S-adenosyl-L-homocysteine + H(+). In terms of biological role, specifically methylates the pseudouridine at position 1915 (m3Psi1915) in 23S rRNA. This Serratia proteamaculans (strain 568) protein is Ribosomal RNA large subunit methyltransferase H.